A 228-amino-acid polypeptide reads, in one-letter code: Ras-related protein Rab-33B (228 aa).

GTP is bound by residues N41, V42, G43, K44, T45, C46, T60, and T63. Residue T45 coordinates Mg(2+). The Switch 1 signature appears at 54–66 (GRFPQRTEATIGV). Mg(2+) contacts are provided by T63 and D86. Positions 87–106 (TAGQERFRKSMVQHYYRNVH) match the Switch 2 motif. The GTP site is built by G89, N146, K147, D149, A177, and K178. Residues C226 and C228 are each lipidated (S-geranylgeranyl cysteine). C228 carries the cysteine methyl ester modification.

It belongs to the small GTPase superfamily. Rab family. Interacts (GTP- and GDP-bound forms) with ATG16L1; the complex consists of a tetramer where two RAB33B molecules bind independently one molecule of the ATG16L1 homodimer; the interaction promotes ATG12-ATG5-ATG16L1 complex recruitment to phagophores. Interacts with ATG16L2; however interaction is approximately hundred times lower than for ATG16L1. Interacts with RIC1 (via C-terminus domain); the interaction is direct with a preference for RAB33B-GTP. Interacts with RGP1. It depends on Mg(2+) as a cofactor.

It localises to the golgi apparatus membrane. The protein localises to the golgi apparatus. It is found in the cis-Golgi network. The protein resides in the preautophagosomal structure membrane. It carries out the reaction GTP + H2O = GDP + phosphate + H(+). With respect to regulation, regulated by guanine nucleotide exchange factors (GEFs) which promote the exchange of bound GDP for free GTP. Regulated by GTPase activating proteins (GAPs) such as SGSM2 which increase the GTP hydrolysis activity. Inhibited by GDP dissociation inhibitors (GDIs). The small GTPases Rab are key regulators of intracellular membrane trafficking, from the formation of transport vesicles to their fusion with membranes. Rabs cycle between an inactive GDP-bound form and an active GTP-bound form that is able to recruit to membranes different sets of downstream effectors directly responsible for vesicle formation, movement, tethering and fusion. RAB33B acts, in coordination with RAB6A, to regulate intra-Golgi retrograde trafficking. Participates in autophagosome formation by recruiting the ATG12-ATG5-ATG16L1 complex to phagophores, probably in a nucleotide-independent manner. The sequence is that of Ras-related protein Rab-33B (RAB33B) from Gallus gallus (Chicken).